We begin with the raw amino-acid sequence, 299 residues long: Porphobilinogen deaminase (299 aa).

Cys-242 is modified (S-(dipyrrolylmethanemethyl)cysteine).

The protein belongs to the HMBS family. As to quaternary structure, monomer. Dipyrromethane is required as a cofactor.

It carries out the reaction 4 porphobilinogen + H2O = hydroxymethylbilane + 4 NH4(+). It participates in porphyrin-containing compound metabolism; protoporphyrin-IX biosynthesis; coproporphyrinogen-III from 5-aminolevulinate: step 2/4. Functionally, tetrapolymerization of the monopyrrole PBG into the hydroxymethylbilane pre-uroporphyrinogen in several discrete steps. In Rickettsia typhi (strain ATCC VR-144 / Wilmington), this protein is Porphobilinogen deaminase.